A 65-amino-acid polypeptide reads, in one-letter code: UPF0434 protein RPD_0454 (65 aa).

This sequence belongs to the UPF0434 family.

This Rhodopseudomonas palustris (strain BisB5) protein is UPF0434 protein RPD_0454.